Here is a 498-residue protein sequence, read N- to C-terminus: ATP synthase subunit alpha 1 (498 aa).

It belongs to the ATPase alpha/beta chains family. In terms of assembly, F-type ATPases have 2 components, CF(1) - the catalytic core - and CF(0) - the membrane proton channel. CF(1) has five subunits: alpha(3), beta(3), gamma(1), delta(1), epsilon(1). CF(0) has three main subunits: a(1), b(2) and c(9-12). The alpha and beta chains form an alternating ring which encloses part of the gamma chain. CF(1) is attached to CF(0) by a central stalk formed by the gamma and epsilon chains, while a peripheral stalk is formed by the delta and b chains.

Its subcellular location is the cell membrane. It catalyses the reaction ATP + H2O + 4 H(+)(in) = ADP + phosphate + 5 H(+)(out). In terms of biological role, produces ATP from ADP in the presence of a proton gradient across the membrane. The alpha chain is a regulatory subunit. This is ATP synthase subunit alpha 1 from Listeria monocytogenes serotype 4b (strain F2365).